Consider the following 532-residue polypeptide: CTP synthase (532 aa).

The segment at 1-267 (MAKFVFVTGG…HGLVLDQLQI (267 aa)) is amidoligase domain. Residue Ser-13 coordinates CTP. Position 13 (Ser-13) interacts with UTP. Residue 14–19 (GLGKGI) coordinates ATP. Tyr-54 contacts L-glutamine. Asp-71 is a binding site for ATP. Mg(2+)-binding residues include Asp-71 and Glu-141. CTP contacts are provided by residues 148-150 (DIE), 188-193 (KTKPIQ), and Lys-224. UTP-binding positions include 188–193 (KTKPIQ) and Lys-224. The region spanning 292 to 532 (EVTFVGKYIE…GFVEAIVNNK (241 aa)) is the Glutamine amidotransferase type-1 domain. Gly-354 contributes to the L-glutamine binding site. Catalysis depends on Cys-381, which acts as the Nucleophile; for glutamine hydrolysis. Residues 382 to 385 (LGMQ), Glu-405, and Arg-462 each bind L-glutamine. Catalysis depends on residues His-507 and Glu-509.

This sequence belongs to the CTP synthase family. As to quaternary structure, homotetramer.

The enzyme catalyses UTP + L-glutamine + ATP + H2O = CTP + L-glutamate + ADP + phosphate + 2 H(+). The catalysed reaction is L-glutamine + H2O = L-glutamate + NH4(+). It catalyses the reaction UTP + NH4(+) + ATP = CTP + ADP + phosphate + 2 H(+). The protein operates within pyrimidine metabolism; CTP biosynthesis via de novo pathway; CTP from UDP: step 2/2. Allosterically activated by GTP, when glutamine is the substrate; GTP has no effect on the reaction when ammonia is the substrate. The allosteric effector GTP functions by stabilizing the protein conformation that binds the tetrahedral intermediate(s) formed during glutamine hydrolysis. Inhibited by the product CTP, via allosteric rather than competitive inhibition. Its function is as follows. Catalyzes the ATP-dependent amination of UTP to CTP with either L-glutamine or ammonia as the source of nitrogen. Regulates intracellular CTP levels through interactions with the four ribonucleotide triphosphates. The chain is CTP synthase from Mesoplasma florum (strain ATCC 33453 / NBRC 100688 / NCTC 11704 / L1) (Acholeplasma florum).